A 262-amino-acid polypeptide reads, in one-letter code: Lysosomal-associated transmembrane protein 5 (262 aa).

Helical transmembrane passes span 19–39, 64–84, 92–112, 134–154, and 184–204; these read IATT…FIEH, ISSF…LIGV, LLPF…TLLG, FPLM…LCSS, and FIKM…FKVY. At tyrosine 259 the chain carries Phosphotyrosine.

It belongs to the LAPTM4/LAPTM5 transporter family. In terms of assembly, binds to ubiquitin. Preferentially expressed in adult hematopoietic tissues. High levels in lymphoid and myeloid tissues. Highly expressed in peripheral blood leukocytes, thymus, spleen and lung, followed by placenta, liver and kidney.

The protein localises to the lysosome membrane. Functionally, may have a special functional role during embryogenesis and in adult hematopoietic cells. This Homo sapiens (Human) protein is Lysosomal-associated transmembrane protein 5 (LAPTM5).